Consider the following 474-residue polypeptide: Ribulose bisphosphate carboxylase/oxygenase activase, chloroplastic (474 aa).

Residues 1–58 constitute a chloroplast transit peptide; it reads MAAAVSTVGAINRAPLSLNGSGSGAVSAPASTFLGKKVVTVSRFAQSNKKSNGSFKVL. Thr-78 is modified (phosphothreonine; by CK2). An ATP-binding site is contributed by 165–172; sequence GGKGQGKS. Thr-283 bears the Phosphothreonine mark.

This sequence belongs to the RuBisCO activase family. In terms of processing, phosphorylated at Thr-78 by CK2.

It is found in the plastid. The protein resides in the chloroplast stroma. Its subcellular location is the chloroplast. The protein localises to the plastoglobule. In terms of biological role, activation of RuBisCO (ribulose-1,5-bisphosphate carboxylase/oxygenase; EC 4.1.1.39) involves the ATP-dependent carboxylation of the epsilon-amino group of lysine leading to a carbamate structure. This chain is Ribulose bisphosphate carboxylase/oxygenase activase, chloroplastic (RCA), found in Arabidopsis thaliana (Mouse-ear cress).